The chain runs to 332 residues: Ribosomal RNA small subunit methyltransferase H (332 aa).

Residues 36 to 38 (GGY), Asp54, Phe81, Asp102, and Gln109 contribute to the S-adenosyl-L-methionine site. The interval 297–318 (ARSAKLRGAERTEAPAHAAGDL) is disordered.

Belongs to the methyltransferase superfamily. RsmH family.

The protein localises to the cytoplasm. The catalysed reaction is cytidine(1402) in 16S rRNA + S-adenosyl-L-methionine = N(4)-methylcytidine(1402) in 16S rRNA + S-adenosyl-L-homocysteine + H(+). In terms of biological role, specifically methylates the N4 position of cytidine in position 1402 (C1402) of 16S rRNA. This is Ribosomal RNA small subunit methyltransferase H from Rhodopseudomonas palustris (strain TIE-1).